A 2177-amino-acid chain; its full sequence is MAAFGILSYEHRPLKRPRLGPPDVYPQDPKQKEDELTALNVKQGFNNQPAVSGDEHGSAKNVSFNPAKISSNFSSIIAEKLRCNTLPDTGRRKPQVNQKDNFWLVTARSQSAINTWFTDLAGTKPLTQLAKKVPIFSKKEEVFGYLAKYTVPVMRAAWLIKMTCAYYAAISETKVKKRHVDPFMEWTQIITKYLWEQLQKMAEYYRPGPAGSGGCGSTIGPLPHDVEVAIRQWDYTEKLAMFMFQDGMLDRHEFLTWVLECFEKIRPGEDELLKLLLPLLLRYSGEFVQSAYLSRRLAYFCTRRLALQLDGVSSHSSHVISAQSTSTLPTTPAPQPPTSSTPSTPFSDLLMCPQHRPLVFGLSCILQTILLCCPSALVWHYSLTDSRIKTGSPLDHLPIAPSNLPMPEGNSAFTQQVRAKLREIEQQIKERGQAVEVRWSFDKCQEATAGFTIGRVLHTLEVLDSHSFERSDFSNSLDSLCNRIFGLGPSKDGHEISSDDDAVVSLLCEWAVSCKRSGRHRAMVVAKLLEKRQAEIEAERCGESEAADEKGSIASGSLSAPSAPIFQDVLLQFLDTQAPMLTDPRSESERVEFFNLVLLFCELIRHDVFSHNMYTCTLISRGDLAFGAPGPRPPSPFDDPADDPEHKEAEGSSSSKLEDPGLSESMDIDPSSSVLFEDMEKPDFSLFSPTMPCEGKGSPSPEKPDVEKEVKPPPKEKIEGTLGVLYDQPRHVQYATHFPIPQEESCSHECNQRLVVLFGVGKQRDDARHAIKKITKDILKVLNRKGTAETDQLAPIVPLNPGDLTFLGGEDGQKRRRNRPEAFPTAEDIFAKFQHLSHYDQHQVTAQVSRNVLEQITSFALGMSYHLPLVQHVQFIFDLMEYSLSISGLIDFAIQLLNELSVVEAELLLKSSDLVGSYTTSLCLCIVAVLRHYHACLILNQDQMAQVFEGLCGVVKHGMNRSDGSSAERCILAYLYDLYTSCSHLKNKFGELFSDFCSKVKNTIYCNVEPSESNMRWAPEFMIDTLENPAAHTFTYTGLGKSLSENPANRYSFVCNALMHVCVGHHDPDRVNDIAILCAELTGYCKSLSAEWLGVLKALCCSSNNGTCGFNDLLCNVDVSDLSFHDSLATFVAILIARQCLLLEDLIRCAAIPSLLNAACSEQDSEPGARLTCRILLHLFKTPQLNPCQSDGNKPTVGIRSSCDRHLLAASQNRIVDGAVFAVLKAVFVLGDAELKGSGFTVTGGTEELPEEEGGGGSGGRRQGGRNISVETASLDVYAKYVLRSICQQEWVGERCLKSLCEDSNDLQDPVLSSAQAQRLMQLICYPHRLLDNEDGENPQRQRIKRILQNLDQWTMRQSSLELQLMIKQTPNNEMNSLLENIAKATIEVFQQSAETGSSSGSTASNMPSSSKTKPVLSSLERSGVWLVAPLIAKLPTSVQGHVLKAAGEELEKGQHLGSSSRKERDRQKQKSMSLLSQQPFLSLVLTCLKGQDEQREGLLTSLYSQVHQIVNNWRDDQYLDDCKPKQLMHEALKLRLNLVGGMFDTVQRSTQQTTEWAMLLLEIIISGTVDMQSNNELFTTVLDMLSVLINGTLAADMSSISQGSMEENKRAYMNLAKKLQKELGERQSDSLEKVRQLLPLPKQTRDVITCEPQGSLIDTKGNKIAGFDSIFKKEGLQVSTKQKISPWDLFEGLKPSAPLSWGWFGTVRVDRRVARGEEQQRLLLYHTHLRPRPRAYYLEPLPLPPEDEEPPAPTLLEPEKKAPEPPKTDKPGAAPPSTEERKKKSTKGKKRSQPATKTEDYGMGPGRSGPYGVTVPPDLLHHPNPGSITHLNYRQGSIGLYTQNQPLPAGGPRVDPYRPVRLPMQKLPTRPTYPGVLPTTMTGVMGLEPSSYKTSVYRQQQPAVPQGQRLRQQLQQSQGMLGQSSVHQMTPSSSYGLQTSQGYTPYVSHVGLQQHTGPAGTMVPPSYSSQPYQSTHPSTNPTLVDPTRHLQQRPSGYVHQQAPTYGHGLTSTQRFSHQTLQQTPMISTMTPMSAQGVQAGVRSTAILPEQQQQQQQQQQQQQQQQQQQQQQQQQQYHIRQQQQQQILRQQQQQQQQQQQQQQQQQQQQQQQQQQHQQQQQQQAAPPQPQPQSQPQFQRQGLQQTQQQQQTAALVRQLQQQLSNTQPQPSTNIFGRY.

Residues 12–35 form a disordered region; it reads RPLKRPRLGPPDVYPQDPKQKEDE. K80 is subject to N6-acetyllysine. Phosphotyrosine is present on Y166. Disordered regions lie at residues 323–344, 627–669, 690–717, and 1241–1266; these read QSTS…TPST, GAPG…MDID, TMPC…PKEK, and TVTG…QGGR. 4 positions are modified to phosphoserine: S635, S665, S698, and S700. The span at 702 to 717 shows a compositional bias: basic and acidic residues; sequence EKPDVEKEVKPPPKEK. Residues S1258 and S1269 each carry the phosphoserine modification. Positions 1394–1411 are enriched in low complexity; sequence AETGSSSGSTASNMPSSS. Disordered regions lie at residues 1394–1415, 1450–1474, and 1738–1829; these read AETG…KTKP, ELEK…KSMS, and YLEP…PGSI. 2 stretches are compositionally biased toward basic and acidic residues: residues 1450–1469 and 1758–1771; these read ELEK…DRQK and EPEK…KTDK. The segment at 1616–2051 is interaction with CTNNB1 and GLI3; the sequence is LAKKLQKELG…VRSTAILPEQ (436 aa). Positions 1784 to 1793 are enriched in basic residues; the sequence is KKSTKGKKRS. K1798 carries the post-translational modification N6-acetyllysine. The residue at position 1899 (R1899) is an Asymmetric dimethylarginine; alternate. The residue at position 1899 (R1899) is an Omega-N-methylarginine; alternate. R1910 is subject to Omega-N-methylarginine. 2 disordered regions span residues 1919–1938 and 1967–1989; these read QGML…SYGL and SYSS…DPTR. Positions 1927–1938 are enriched in polar residues; that stretch reads VHQMTPSSSYGL. A compositionally biased stretch (low complexity) spans 1967 to 1980; the sequence is SYSSQPYQSTHPST. Residues R1994 and R2015 each carry the asymmetric dimethylarginine modification. Low complexity-rich tracts occupy residues 2115-2125, 2133-2149, and 2158-2171; these read QHQQQQQQQAA, SQPQ…QQQQ, and LQQQ…QPST. 2 disordered regions span residues 2115-2149 and 2158-2177; these read QHQQ…QQQQ and LQQQ…FGRY.

This sequence belongs to the Mediator complex subunit 12 family. As to quaternary structure, component of the Mediator complex, which is composed of MED1, MED4, MED6, MED7, MED8, MED9, MED10, MED11, MED12, MED13, MED13L, MED14, MED15, MED16, MED17, MED18, MED19, MED20, MED21, MED22, MED23, MED24, MED25, MED26, MED27, MED29, MED30, MED31, CCNC, CDK8 and CDC2L6/CDK11. The MED12, MED13, CCNC and CDK8 subunits form a distinct module termed the CDK8 module. Mediator containing the CDK8 module is less active than Mediator lacking this module in supporting transcriptional activation. Individual preparations of the Mediator complex lacking one or more distinct subunits have been variously termed ARC, CRSP, DRIP, PC2, SMCC and TRAP. Also interacts with CTNNB1 and GLI3. Ubiquitous.

The protein localises to the nucleus. In terms of biological role, component of the Mediator complex, a coactivator involved in the regulated transcription of nearly all RNA polymerase II-dependent genes. Mediator functions as a bridge to convey information from gene-specific regulatory proteins to the basal RNA polymerase II transcription machinery. Mediator is recruited to promoters by direct interactions with regulatory proteins and serves as a scaffold for the assembly of a functional pre-initiation complex with RNA polymerase II and the general transcription factors. This subunit may specifically regulate transcription of targets of the Wnt signaling pathway and SHH signaling pathway. The chain is Mediator of RNA polymerase II transcription subunit 12 (MED12) from Homo sapiens (Human).